Reading from the N-terminus, the 664-residue chain is Macoilin (664 aa).

4 helical membrane-spanning segments follow: residues 28–48 (TFLY…DFVL), 75–95 (AFSV…LLFI), 120–140 (VCLP…AIRF), and 154–174 (FAAH…KSYV). Residues 252–265 (YREKGKEKDKDAKK) are compositionally biased toward basic and acidic residues. The tract at residues 252 to 274 (YREKGKEKDKDAKKHNLGINNNN) is disordered. Serine 305 bears the Phosphoserine mark. The segment covering 320–348 (KNYKNASGVVNSSPRSHSATNGSIPSSSS) has biased composition (polar residues). The disordered stretch occupies residues 320 to 375 (KNYKNASGVVNSSPRSHSATNGSIPSSSSKNEKKQRCTSKGPSAHKDLMENCIPNN). Asparagine 324 is a glycosylation site (N-linked (GlcNAc...) asparagine). At serine 332 the chain carries Phosphoserine. 2 N-linked (GlcNAc...) asparagine glycosylation sites follow: asparagine 340 and asparagine 452. The interval 630 to 664 (TSPLSPVSPHYSSKFVETSPSGLDPNASVYQPLKK) is disordered. Residues serine 631 and serine 634 each carry the phosphoserine modification. Asparagine 655 carries N-linked (GlcNAc...) asparagine glycosylation.

Belongs to the macoilin family.

It localises to the rough endoplasmic reticulum membrane. It is found in the nucleus membrane. Plays a role in the regulation of neuronal activity. In Rattus norvegicus (Rat), this protein is Macoilin.